Reading from the N-terminus, the 64-residue chain is Cold shock protein CapA (64 aa).

In terms of domain architecture, CSD spans 7 to 64; the sequence is GTVKWFNDEKGFGFITPQGGGDDLFVHFKAIESDGFKSLKEGQTVSFVAEKGQKGMQA.

The protein resides in the cytoplasm. Its function is as follows. Affects cell viability at low temperatures. In Pseudomonas fragi, this protein is Cold shock protein CapA (capA).